Consider the following 399-residue polypeptide: Elongation factor Tu 2 (399 aa).

Residues 10–209 form the tr-type G domain; the sequence is KPHVNIGTIG…QVDGYIPEPE (200 aa). A G1 region spans residues 19–26; sequence GHVDHGKT. 19 to 26 contacts GTP; that stretch reads GHVDHGKT. Threonine 26 is a Mg(2+) binding site. Positions 60-64 are G2; that stretch reads GITIA. Positions 81–84 are G3; it reads DCPG. Residues 81–85 and 136–139 contribute to the GTP site; these read DCPGH and NKAD. Positions 136-139 are G4; sequence NKAD. Residues 174–176 are G5; that stretch reads SAL.

It belongs to the TRAFAC class translation factor GTPase superfamily. Classic translation factor GTPase family. EF-Tu/EF-1A subfamily. As to quaternary structure, monomer.

The protein localises to the cytoplasm. The enzyme catalyses GTP + H2O = GDP + phosphate + H(+). GTP hydrolase that promotes the GTP-dependent binding of aminoacyl-tRNA to the A-site of ribosomes during protein biosynthesis. The polypeptide is Elongation factor Tu 2 (Syntrophotalea carbinolica (strain DSM 2380 / NBRC 103641 / GraBd1) (Pelobacter carbinolicus)).